We begin with the raw amino-acid sequence, 88 residues long: Probable Fe(2+)-trafficking protein (88 aa).

It belongs to the Fe(2+)-trafficking protein family.

Could be a mediator in iron transactions between iron acquisition and iron-requiring processes, such as synthesis and/or repair of Fe-S clusters in biosynthetic enzymes. The polypeptide is Probable Fe(2+)-trafficking protein (Neisseria gonorrhoeae (strain ATCC 700825 / FA 1090)).